The following is a 430-amino-acid chain: Evolutionarily conserved signaling intermediate in Toll pathway, mitochondrial (430 aa).

The N-terminal 48 residues, 1 to 48, are a transit peptide targeting the mitochondrion; the sequence is MSWVQATLLARGLCRAWGGICRAALPGTSISQVPRQLPRGLHCSAAPH. The tract at residues 41–66 is disordered; the sequence is LHCSAAPHSSEQSLVSSPPEPRQRPT. A compositionally biased stretch (polar residues) spans 47–56; that stretch reads PHSSEQSLVS. Lys-372 participates in a covalent cross-link: Glycyl lysine isopeptide (Lys-Gly) (interchain with G-Cter in ubiquitin). The segment at 400 to 430 is disordered; sequence LHTSSAGLEEPPPPEDHEEDDSRQRQQQGQS. The segment covering 411-420 has biased composition (acidic residues); the sequence is PPPEDHEEDD.

The protein belongs to the ECSIT family. Interacts with MAP3K1, SMAD4 and TRAF6. Interacts with SMAD1 only after BMP4-treatment. Part of the mitochondrial complex I assembly/MCIA complex that comprises at least the core subunits TMEM126B, NDUFAF1, ECSIT and ACAD9 and complement subunits such as COA1 and TMEM186. Interacts with NDUFAF1. Interacts with ACAD9. Interacts with TRIM59. Interacts with TMEM70 and TMEM242. Interacts (when ubiquitinated) with NF-kappa-B subunits RELA and NFKB1. Interacts with RIGI, IFIT1 and MAVS; these interactions promote RLR-mediated type I IFN induction. Interacts with SQSTM1; this interaction inhibits TLR4 signaling via functional regulation of the TRAF6-ECSIT complex. Interacts with cereblon/CRBN; this interaction inhibits the ubiquitination of ECSIT. Ubiquitinated on Lys-372; leading to translocation in the nucleus together with RELA and NFKB1 and expression of NF-kappa-B-dependent genes.

It localises to the cytoplasm. The protein resides in the nucleus. The protein localises to the mitochondrion. Its function is as follows. Adapter protein that plays a role in different signaling pathways including TLRs and IL-1 pathways or innate antiviral induction signaling. Plays a role in the activation of NF-kappa-B by forming a signal complex with TRAF6 and TAK1/MAP3K7 to activate TAK1/MAP3K7 leading to activation of IKKs. Once ubiquitinated, interacts with the dissociated RELA and NFKB1 proteins and translocates to the nucleus where it induces NF-kappa-B-dependent gene expression. Plays a role in innate antiviral immune response by bridging the pattern recognition receptors RIGI and MDA5/IFIT1 to the MAVS complex at the mitochondrion. Promotes proteolytic activation of MAP3K1. Involved in the BMP signaling pathway. Required for normal embryonic development. As part of the MCIA complex, involved in the assembly of the mitochondrial complex I. The polypeptide is Evolutionarily conserved signaling intermediate in Toll pathway, mitochondrial (Macaca fascicularis (Crab-eating macaque)).